A 353-amino-acid chain; its full sequence is Vomeronasal type-1 receptor 1 (353 aa).

Over 1-56 the chain is Extracellular; it reads MVGDTLKLLSPLMTRYFFLLFYSTDSSDLNENQHPLDFDEMAFGKVKSGISFLIQT. Residues 57–77 traverse the membrane as a helical segment; it reads GVGILGNSFLLCFYNLILFTG. The Cytoplasmic portion of the chain corresponds to 78-84; that stretch reads HKLRPTD. Residues 85-105 traverse the membrane as a helical segment; it reads LILSHLALANSMVLFFKGIPQ. The Extracellular segment spans residues 106-132; sequence TMAAFGLKYLLNDTGCKFVFYYHRVGT. Asn-117 carries an N-linked (GlcNAc...) asparagine glycan. Residues 133-153 traverse the membrane as a helical segment; that stretch reads RVSLSTICLLNGFQAIKLNPS. Residues 154–169 lie on the Cytoplasmic side of the membrane; sequence ICRWMEIKIRSPRFID. The chain crosses the membrane as a helical span at residues 170-190; it reads FCCLLCWVPHVLMNASVLLLV. The Extracellular segment spans residues 191–226; the sequence is NGPLNSKNSSAKNNYGYCSYKASKRFSSLHAVLYFS. Residue Asn-198 is glycosylated (N-linked (GlcNAc...) asparagine). The chain crosses the membrane as a helical span at residues 227-247; the sequence is PDFMSLGFMVWASGSMVFFLY. Residues 248 to 274 lie on the Cytoplasmic side of the membrane; sequence RHKQQVQHNHSNRLSCRPSQETRATRT. Residues 275–295 form a helical membrane-spanning segment; the sequence is IMVLVSSFFVFYSVHSFLTIW. Residues 296–303 are Extracellular-facing; sequence TTVVANPG. The chain crosses the membrane as a helical span at residues 304–324; it reads QWIVNNSVLVASYFPSRSPFV. At 325–353 the chain is on the cytoplasmic side; it reads LIMSDTRISQFCFACRTRKTLFPNLVVMP.

The protein belongs to the G-protein coupled receptor 1 family.

Its subcellular location is the cell membrane. In terms of biological role, putative pheromone receptor. In Gorilla gorilla gorilla (Western lowland gorilla), this protein is Vomeronasal type-1 receptor 1 (VN1R1).